The sequence spans 306 residues: D-alanine--D-alanine ligase B (306 aa).

Residues Glu15 and Ser150 contribute to the active site. In terms of domain architecture, ATP-grasp spans 101-303 (KLLWQGAGLP…FSQLVVRILE (203 aa)). Position 134–189 (134–189 (ISSLGLPVIVKPSREGSSVGMSKVVAENALQDALRLAFQHDEEVLIEKWLSGPEFT)) interacts with ATP. The Mg(2+) site is built by Asp257, Glu270, and Asn272. Ser281 is a catalytic residue.

It belongs to the D-alanine--D-alanine ligase family. In terms of assembly, monomer. Mg(2+) is required as a cofactor. The cofactor is Mn(2+).

It is found in the cytoplasm. It carries out the reaction 2 D-alanine + ATP = D-alanyl-D-alanine + ADP + phosphate + H(+). Its pathway is cell wall biogenesis; peptidoglycan biosynthesis. In terms of biological role, cell wall formation. This chain is D-alanine--D-alanine ligase B, found in Escherichia coli O6:H1 (strain CFT073 / ATCC 700928 / UPEC).